The primary structure comprises 514 residues: MTTGADADARRTYDEERAYVSAVSPTKLVVAKGFVPNMRVPGEIYVNERLRELVLDELRAYCDEDRRGGGYSPAVKQIANVAALPGVVRASIALPDVHSGYGFAIGNVAAFDCGDDDAIVSPGGVGFDINCGVRLLRTNLTEAEVGPVKEALAQSLFDHIPVGVGSRGIIPTSPAALEAALEMGMDWSLREGYAWAEDKEHTEEYGRMLNADPSKVSARAKKRGLPQMGTLGAGNHYAEIQVVDEIYDEFAAKKMGIDRVGQICIMIHSGSRGLGHQVATDSLTAMERAMERDGIEVNDRQLACAKISSQEGQDYLAAMACAANYAWVNRSSMTFLCRQAFAKMFGKPPDELDMHVVYDVSHNIAKFEEHIVDGEMKTLLVHRKGSTRAFPPHHPLIPVDYQYTGQPVLIGGTMGTCSYILTGTEKGMRDTFGSTCHGAGRARSRNKSRHVLQYEDVLAKLKTKGIAIRVASPKLVMEEAPESYKDVTEVVNTCHDAGISKKCVKLRPIAVVKG.

Residues D128, C131, H236, H268, and H362 each contribute to the Mn(2+) site. GMP is bound at residue 235–239; that stretch reads NHYAE. Residues 362 to 363, 411 to 414, S418, 437 to 440, and K513 each bind GMP; these read HN, GGTM, and HGAG. H437 (GMP-histidine intermediate) is an active-site residue.

Belongs to the RtcB family. Catalytic component of the tRNA-splicing ligase complex. The cofactor is Mn(2+).

The enzyme catalyses a 3'-end 3'-phospho-ribonucleotide-RNA + a 5'-end dephospho-ribonucleoside-RNA + GTP = a ribonucleotidyl-ribonucleotide-RNA + GMP + diphosphate. It carries out the reaction a 3'-end 2',3'-cyclophospho-ribonucleotide-RNA + a 5'-end dephospho-ribonucleoside-RNA + GTP + H2O = a ribonucleotidyl-ribonucleotide-RNA + GMP + diphosphate + H(+). In terms of biological role, catalytic subunit of the tRNA-splicing ligase complex that acts by directly joining spliced tRNA halves to mature-sized tRNAs by incorporating the precursor-derived splice junction phosphate into the mature tRNA as a canonical 3',5'-phosphodiester. May act as an RNA ligase with broad substrate specificity, and may function toward other RNAs. In Ostreococcus lucimarinus (strain CCE9901), this protein is RNA-splicing ligase RtcB homolog.